The primary structure comprises 154 residues: L-alanine exporter AlaE (154 aa).

Helical transmembrane passes span 21-41 (FAMV…LSGM), 51-71 (LVAI…RDFF), 90-110 (ILAY…VIGA), and 115-135 (IVAA…VYGY).

This sequence belongs to the AlaE exporter family.

It localises to the cell inner membrane. Functionally, exports L-alanine. The sequence is that of L-alanine exporter AlaE from Escherichia fergusonii (strain ATCC 35469 / DSM 13698 / CCUG 18766 / IAM 14443 / JCM 21226 / LMG 7866 / NBRC 102419 / NCTC 12128 / CDC 0568-73).